The following is a 461-amino-acid chain: MVTLSSPSVIAGGRDIDSTGYAWWSGNARLINLSGKLLGAHVAHAGLIVFWAGAMTLFEVAHFVPEKPMYEQGIILLSHLATLGWGVGPGGEVVDTFPYFVVGVLHLISSAVLGLGGIYHALRGPESLEEYSTFFSQDWKDKNQMTNIIGYHLILLGLGAFLLVFKAMFFGGVYDTWAPGGGDVRIISNPTLNPAVIFGYLLKSPFGGDGWIVSVDNLEDVIGGHIWIGLICISGGIWHILTKPFGWVRRAFIWNGEAYLSYSLGALSLMGFIASTMVWYNNTVYPSEFFGPTAAEASQSQAFTFLVRDQRLGANIGSAQGPTGLGKYLMRSPTGEIIFGGETMRFWDFRGPWLEPLRGPNGLDLDKLTNDIQPWQARRAAEYMTHAPLGSLNSVGGVATEINSVNFVSPRAWLATSHFVLAFFFLVGHLWHAGRARAAAAGFEKGIDRATEPVLAMRDLD.

Helical transmembrane passes span Leu57–Ala81, Leu122–Asn143, Lys166–Ser188, Lys243–Ser263, and Trp279–Ser300. Glu355 serves as a coordination point for [CaMn4O5] cluster. Residues Arg435 to Asp459 form a helical membrane-spanning segment.

This sequence belongs to the PsbB/PsbC family. PsbC subfamily. As to quaternary structure, PSII is composed of 1 copy each of membrane proteins PsbA, PsbB, PsbC, PsbD, PsbE, PsbF, PsbH, PsbI, PsbJ, PsbK, PsbL, PsbM, PsbT, PsbX, PsbY, PsbZ, Psb30/Ycf12, peripheral proteins PsbO, CyanoQ (PsbQ), PsbU, PsbV and a large number of cofactors. It forms dimeric complexes. Binds multiple chlorophylls and provides some of the ligands for the Ca-4Mn-5O cluster of the oxygen-evolving complex. It may also provide a ligand for a Cl- that is required for oxygen evolution. PSII binds additional chlorophylls, carotenoids and specific lipids. serves as cofactor.

Its subcellular location is the cellular thylakoid membrane. Its function is as follows. One of the components of the core complex of photosystem II (PSII). It binds chlorophyll and helps catalyze the primary light-induced photochemical processes of PSII. PSII is a light-driven water:plastoquinone oxidoreductase, using light energy to abstract electrons from H(2)O, generating O(2) and a proton gradient subsequently used for ATP formation. The chain is Photosystem II CP43 reaction center protein from Synechococcus elongatus (strain ATCC 33912 / PCC 7942 / FACHB-805) (Anacystis nidulans R2).